The primary structure comprises 619 residues: Chaperone protein HscA homolog (619 aa).

The protein belongs to the heat shock protein 70 family.

In terms of biological role, chaperone involved in the maturation of iron-sulfur cluster-containing proteins. Has a low intrinsic ATPase activity which is markedly stimulated by HscB. The sequence is that of Chaperone protein HscA homolog from Shewanella frigidimarina (strain NCIMB 400).